Here is a 312-residue protein sequence, read N- to C-terminus: NADPH-dependent alpha-keto amide reductase (312 aa).

NADPH-binding residues include glycine 25, threonine 26, arginine 27, and aspartate 59. Active-site proton donor residues include tyrosine 64 and histidine 122. Serine 123 is modified (phosphoserine). Residues serine 157, glutamine 179, serine 208, leucine 210, threonine 257, threonine 258, serine 259, serine 260, lysine 261, and arginine 264 each contribute to the NADPH site.

It belongs to the aldo/keto reductase family. In terms of assembly, monomer. In terms of processing, the N-terminus is blocked.

The protein resides in the cytoplasm. It is found in the nucleus. Reduces aromatic alpha-keto amides, aliphatic and aromatic alpha-keto esters, but not beta-keto esters. In Saccharomyces cerevisiae (strain ATCC 204508 / S288c) (Baker's yeast), this protein is NADPH-dependent alpha-keto amide reductase.